The following is a 195-amino-acid chain: Probable GTP-binding protein EngB (195 aa).

Residues 24–195 enclose the EngB-type G domain; that stretch reads ELPEIALAGR…EAWDAILEKL (172 aa). Residues 32 to 39, 59 to 63, 77 to 80, 144 to 147, and 176 to 178 each bind GTP; these read GRSNVGKS, GKTQL, DVPG, TKAD, and FSS. Residues serine 39 and threonine 61 each contribute to the Mg(2+) site.

The protein belongs to the TRAFAC class TrmE-Era-EngA-EngB-Septin-like GTPase superfamily. EngB GTPase family. The cofactor is Mg(2+).

Functionally, necessary for normal cell division and for the maintenance of normal septation. In Streptococcus pneumoniae (strain JJA), this protein is Probable GTP-binding protein EngB.